Here is a 2000-residue protein sequence, read N- to C-terminus: Sodium channel protein type 3 subunit alpha (2000 aa).

Topologically, residues 1-128 (MAQALLVPPG…KIAIKILVHS (128 aa)) are cytoplasmic. Residues 28–60 (RAAEEKAKKPKKEQDNDDENKPKPNSDLEAGKN) are disordered. The span at 46 to 57 (ENKPKPNSDLEA) shows a compositional bias: basic and acidic residues. The stretch at 110–455 (ILTPLNPVRK…QQMLEQLKKQ (346 aa)) is one I repeat. Residues 129-146 (LFSMLIMCTILTNCVFMT) traverse the membrane as a helical segment. The Extracellular portion of the chain corresponds to 147–152 (LSNPPD). A helical transmembrane segment spans residues 153–174 (WTKNVEYTFTGIYTFESLIKIL). Topologically, residues 175 to 188 (ARGFCLEDFTFLRD) are cytoplasmic. A helical membrane pass occupies residues 189 to 206 (PWNWLDFSVIVMAYVTEF). At 207–213 (VSLGNVS) the chain is on the extracellular side. Asparagine 211 is a glycosylation site (N-linked (GlcNAc...) asparagine). A helical membrane pass occupies residues 214-235 (ALRTFRVLRALKTISVIPGLKT). Over 236 to 249 (IVGALIQSVKKLSD) the chain is Cytoplasmic. The chain crosses the membrane as a helical span at residues 250–269 (VMILTVFCLSVFALIGLQLF). Topologically, residues 270 to 369 (MGNLRNKCLQ…NYGYTSFDTF (100 aa)) are extracellular. 5 N-linked (GlcNAc...) asparagine glycosylation sites follow: asparagine 290, asparagine 296, asparagine 302, asparagine 307, and asparagine 339. Positions 370–386 (SWAFLSLFRLMTQDYWE) form an intramembrane region, pore-forming. Residues 387–397 (NLYQLTLRAAG) are Extracellular-facing. Residues 398–424 (KTYMIFFVLVIFLGSFYLVNLILAVVA) traverse the membrane as a helical segment. Over 425–761 (MAYEEQNQAT…LVNLIVMDPF (337 aa)) the chain is Cytoplasmic. Serine 484, serine 485, and serine 486 each carry phosphoserine. Disordered regions lie at residues 493–528 (SKSA…KSES), 587–631 (VGSE…ASMS), and 662–681 (ALTS…ETEV). Residues 500–509 (RNRRKKRRQR) are compositionally biased toward basic residues. 2 stretches are compositionally biased toward basic and acidic residues: residues 510-528 (EHLE…KSES) and 596-610 (DEHS…RRDS). Over residues 662-678 (ALTSPTGQLPPEGTTTE) the composition is skewed to polar residues. One copy of the II repeat lies at 742 to 1014 (CCDAWLKVKH…QIAVGRMQKG (273 aa)). The chain crosses the membrane as a helical span at residues 762–779 (VDLAITICIVLNTLFMAM). At 780 to 787 (EHYPMTEQ) the chain is on the extracellular side. A helical transmembrane segment spans residues 788-812 (FSSVLTVGNLVFTGIFTAEMVLKII). Residues 813–822 (AMDPYYYFQE) lie on the Cytoplasmic side of the membrane. Residues 823–842 (GWNIFDGIIVSLSLMELGLS) form a helical membrane-spanning segment. Over 843–846 (NVEG) the chain is Extracellular. The helical transmembrane segment at 847 to 865 (LSVLRSFRLLRVFKLAKSW) threads the bilayer. Topologically, residues 866–883 (PTLNMLIKIIGNSVGALG) are cytoplasmic. A helical transmembrane segment spans residues 884–904 (NLTLVLAIIVFIFAVVGMQLF). Residues 905 to 929 (GKSYKECVCKINDDCTLPRWHMNDF) are Extracellular-facing. Cysteine 913 and cysteine 919 are disulfide-bonded. The segment at residues 930 to 945 (FHSFLIVFRVLCGEWI) is an intramembrane region (pore-forming). The Extracellular segment spans residues 946 to 956 (ETMWDCMEVAG). An intrachain disulfide couples cysteine 951 to cysteine 960. Residues 957-983 (QTMCLIVFMLVMVIGNLVVLNLFLALL) traverse the membrane as a helical segment. Topologically, residues 984 to 1205 (LSSFSSDNLA…RKTCYSIVEH (222 aa)) are cytoplasmic. The interval 1118-1162 (EEFSSESELEESKEKLNATSSSEGSTVDVVLPREGEQAETEPEED) is disordered. Residues 1188–1499 (KGKIWWNLRK…KKYYNAMKKL (312 aa)) form an III repeat. The helical transmembrane segment at 1206–1226 (NWFETFIVFMILLSSGALAFE) threads the bilayer. Over 1227-1238 (DIYIEQRKTIKT) the chain is Extracellular. Residues 1239-1260 (MLEYADKVFTYIFILEMLLKWV) form a helical membrane-spanning segment. The Cytoplasmic portion of the chain corresponds to 1261–1266 (AYGFQT). A helical membrane pass occupies residues 1267 to 1292 (YFTNAWCWLDFLIVDVSLVSLVANAL). The Extracellular segment spans residues 1293-1301 (GYSELGAIK). Residues 1302–1320 (SLRTLRALRPLRALSRFEG) form a helical membrane-spanning segment. Over 1321 to 1333 (MRVVVNALVGAIP) the chain is Cytoplasmic. The helical transmembrane segment at 1334–1356 (SIMNVLLVCLIFWLIFSIMGVNL) threads the bilayer. The Extracellular portion of the chain corresponds to 1357–1402 (FAGKFYHCVNMTTGNMFDISDVNNLSDCQALGKQARWKNVKVNFDN). A disulfide bond links cysteine 1364 and cysteine 1384. N-linked (GlcNAc...) asparagine glycosylation is found at asparagine 1366 and asparagine 1380. An intramembrane region (pore-forming) is located at residues 1403 to 1419 (VGAGYLALLQVATFKGW). The Extracellular portion of the chain corresponds to 1420–1442 (MDIMYAAVDSRDVKLQPVYEENL). A helical transmembrane segment spans residues 1443–1468 (YMYLYFVIFIIFGSFFTLNLFIGVII). At 1469 to 1526 (DNFNQQKKKFGGQDIFMTEEQKKYYNAMKKLGSKKPQKPIPRPANKFQGMVFDFVTRQ) the chain is on the cytoplasmic side. The residue at position 1501 (serine 1501) is a Phosphoserine; by PKC. The IV repeat unit spans residues 1508-1806 (IPRPANKFQG…WEKFDPDATQ (299 aa)). A helical membrane pass occupies residues 1527–1545 (VFDISIMILICLNMVTMMV). Over 1546-1553 (ETDDQGKY) the chain is Extracellular. A helical transmembrane segment spans residues 1554-1577 (MTLVLSRINLVFIVLFTGEFVLKL). Residues 1578–1587 (VSLRHYYFTI) lie on the Cytoplasmic side of the membrane. The helical transmembrane segment at 1588–1605 (GWNIFDFVVVILSIVGMF) threads the bilayer. Residues 1606–1617 (LAEMIEKYFVSP) are Extracellular-facing. Residues 1618 to 1640 (TLFRVIRLARIGRILRLIKGAKG) form a helical membrane-spanning segment. Residues 1641 to 1653 (IRTLLFALMMSLP) are Cytoplasmic-facing. Residues 1654 to 1677 (ALFNIGLLLFLVMFIYAIFGMSNF) form a helical membrane-spanning segment. Topologically, residues 1678 to 1699 (AYVKKEAGIDDMFNFETFGNSM) are extracellular. The pore-forming intramembrane region spans 1700–1712 (ICLFQITTSAGWD). The Extracellular segment spans residues 1713-1744 (GLLAPILNSAPPDCDPDTIHPGSSVKGDCGNP). The helical transmembrane segment at 1745–1770 (SVGIFFFVSYIIISFLVVVNMYIAVI) threads the bilayer. Residues 1771-2000 (LENFSVATEE…KGKEVRENQK (230 aa)) lie on the Cytoplasmic side of the membrane. The IQ domain maps to 1900 to 1929 (EEVSAAIIQRNFRCYLLKQRLKNISSNYNK). The segment at 1949–2000 (LNGNSTPEKTDGSSSTTSPPSYDSVTKPDKEKFEKDKPEKESKGKEVRENQK) is disordered. The segment covering 1974–2000 (TKPDKEKFEKDKPEKESKGKEVRENQK) has biased composition (basic and acidic residues).

Belongs to the sodium channel (TC 1.A.1.10) family. Nav1.3/SCN3A subfamily. As to quaternary structure, heterooligomer of an alpha subunit, SCN3A, and 1 to 3 regulatory beta subunits including SCN1B and SCN2B; disulfide-linked with some beta subunits like SCN2B. Interacts with NEDD4L; could regulate expression of SCN3A at the plasma membrane through ubiquitination-regulated endocytosis. Interacts with the conotoxin GVIIJ. Post-translationally, may be ubiquitinated by NEDD4L; which would promote its endocytosis. In terms of processing, phosphorylation at Ser-1501 by PKC in a highly conserved cytoplasmic loop slows inactivation of the sodium channel and reduces peak sodium currents. As to expression, expressed in enterochromaffin cells in both colon and small bowel (at protein level).

The protein localises to the cell membrane. It localises to the basal cell membrane. The catalysed reaction is Na(+)(in) = Na(+)(out). Functionally, pore-forming subunit of Nav1.3, a voltage-gated sodium (Nav) channel that directly mediates the depolarizing phase of action potentials in excitable membranes. Navs, also called VGSCs (voltage-gated sodium channels) or VDSCs (voltage-dependent sodium channels), operate by switching between closed and open conformations depending on the voltage difference across the membrane. In the open conformation they allow Na(+) ions to selectively pass through the pore, along their electrochemical gradient. The influx of Na+ ions provokes membrane depolarization, initiating the propagation of electrical signals throughout cells and tissues. In some secretory cell types, it also participates in cell excitability through membrane depolarization and regulates cells responsiveness to stimuli triggering secretion. For instance, it controls the release of serotonin/5-hydroxytryptamine by enterochromaffin cells and is required for both glucagon- and glucose-induced insulin secretion in pancreatic endocrine cells. The chain is Sodium channel protein type 3 subunit alpha from Homo sapiens (Human).